The primary structure comprises 549 residues: Dihydroxy-acid dehydratase (549 aa).

Mg(2+) is bound at residue D78. Residue C119 coordinates [2Fe-2S] cluster. Residues D120 and K121 each coordinate Mg(2+). Position 121 is an N6-carboxylysine (K121). Position 191 (C191) interacts with [2Fe-2S] cluster. E441 lines the Mg(2+) pocket. S466 serves as the catalytic Proton acceptor.

It belongs to the IlvD/Edd family. Homodimer. The cofactor is [2Fe-2S] cluster. Mg(2+) is required as a cofactor.

It catalyses the reaction (2R)-2,3-dihydroxy-3-methylbutanoate = 3-methyl-2-oxobutanoate + H2O. The enzyme catalyses (2R,3R)-2,3-dihydroxy-3-methylpentanoate = (S)-3-methyl-2-oxopentanoate + H2O. It participates in amino-acid biosynthesis; L-isoleucine biosynthesis; L-isoleucine from 2-oxobutanoate: step 3/4. The protein operates within amino-acid biosynthesis; L-valine biosynthesis; L-valine from pyruvate: step 3/4. In terms of biological role, functions in the biosynthesis of branched-chain amino acids. Catalyzes the dehydration of (2R,3R)-2,3-dihydroxy-3-methylpentanoate (2,3-dihydroxy-3-methylvalerate) into 2-oxo-3-methylpentanoate (2-oxo-3-methylvalerate) and of (2R)-2,3-dihydroxy-3-methylbutanoate (2,3-dihydroxyisovalerate) into 2-oxo-3-methylbutanoate (2-oxoisovalerate), the penultimate precursor to L-isoleucine and L-valine, respectively. This is Dihydroxy-acid dehydratase from Methanosphaera stadtmanae (strain ATCC 43021 / DSM 3091 / JCM 11832 / MCB-3).